Consider the following 490-residue polypeptide: Dual specificity protein kinase CLK3 (490 aa).

Residues methionine 1–aspartate 138 are disordered. Tyrosine 7 is subject to Phosphotyrosine. 6 positions are modified to phosphoserine: serine 9, serine 49, serine 51, serine 67, serine 76, and serine 78. Basic and acidic residues-rich tracts occupy residues tyrosine 26 to proline 56 and glutamate 63 to serine 76. Over residues arginine 88–arginine 116 the composition is skewed to basic residues. The segment covering serine 117–lysine 130 has biased composition (low complexity). Serine 135 bears the Phosphoserine mark. The 317-residue stretch at tyrosine 156–phenylalanine 472 folds into the Protein kinase domain. ATP-binding positions include leucine 162–valine 170 and lysine 186. Residue aspartate 283 is the Proton acceptor of the active site.

Belongs to the protein kinase superfamily. CMGC Ser/Thr protein kinase family. Lammer subfamily. Post-translationally, autophosphorylates on all three types of residues. In terms of tissue distribution, present at high levels in testis and ovary. In testis, expression is restricted to elongated, maturing spermatozoa. Also present in spleen, brain, lung and liver (at protein level).

It is found in the nucleus. The protein localises to the cytoplasm. The protein resides in the cytoplasmic vesicle. Its subcellular location is the secretory vesicle. It localises to the acrosome. It carries out the reaction L-seryl-[protein] + ATP = O-phospho-L-seryl-[protein] + ADP + H(+). It catalyses the reaction L-threonyl-[protein] + ATP = O-phospho-L-threonyl-[protein] + ADP + H(+). The enzyme catalyses L-tyrosyl-[protein] + ATP = O-phospho-L-tyrosyl-[protein] + ADP + H(+). With respect to regulation, leucettine L41 inhibits its kinase activity and affects the regulation of alternative splicing mediated by phosphorylation of SR proteins. Functionally, dual specificity kinase acting on both serine/threonine and tyrosine-containing substrates. Phosphorylates serine- and arginine-rich (SR) proteins of the spliceosomal complex. May be a constituent of a network of regulatory mechanisms that enable SR proteins to control RNA splicing and can cause redistribution of SR proteins from speckles to a diffuse nucleoplasmic distribution. Phosphorylates SRSF1 and SRSF3. Regulates the alternative splicing of tissue factor (F3) pre-mRNA in endothelial cells. The polypeptide is Dual specificity protein kinase CLK3 (Mus musculus (Mouse)).